The sequence spans 81 residues: MKTLLLTLVVVTIVCLDLGYTLKCNKLIPIASKTCPAGKNLCYKMFMMSDLTIPVKRGCIDVCPKNSHLVKYVCCNTDRCN.

A signal peptide spans 1–21 (MKTLLLTLVVVTIVCLDLGYT). Intrachain disulfides connect cysteine 24-cysteine 42, cysteine 35-cysteine 59, cysteine 63-cysteine 74, and cysteine 75-cysteine 80.

It belongs to the three-finger toxin family. Short-chain subfamily. Type IA cytotoxin sub-subfamily. In terms of assembly, monomer in solution; Homodimer and oligomer in the presence of negatively charged lipids forming a pore with a size ranging between 20 and 30 Angstroms. Expressed by the venom gland.

The protein resides in the secreted. Its subcellular location is the target cell membrane. Its function is as follows. Shows cytolytic activity on many different cells by forming pore in lipid membranes. In vivo, increases heart rate or kills the animal by cardiac arrest. In addition, it binds to heparin with high affinity, interacts with Kv channel-interacting protein 1 (KCNIP1) in a calcium-independent manner, and binds to integrin alpha-V/beta-3 (ITGAV/ITGB3) with moderate affinity. The polypeptide is Cytotoxin 1c (Naja atra (Chinese cobra)).